A 142-amino-acid chain; its full sequence is Lysosomal enzyme trafficking factor (142 aa).

Transmembrane regions (helical) follow at residues 8-28 (MGWI…YYIF) and 76-96 (LLPF…VFLF).

It belongs to the LYSET family.

The protein resides in the golgi apparatus membrane. Functionally, required for mannose-6-phosphate-dependent trafficking of lysosomal enzymes. LYSET bridges GlcNAc-1-phosphate transferase (GNPTAB), to the membrane-bound transcription factor site-1 protease (MBTPS1), thus allowing proteolytic activation of the GNPTAB. GNPTAB is involved in the regulation of M6P-dependent Golgi-to-lysosome trafficking of lysosomal enzymes. LYSET is thus an essential factor for maturation and delivery of lysosomal hydrolases. In Danio rerio (Zebrafish), this protein is Lysosomal enzyme trafficking factor (tmem251).